Consider the following 235-residue polypeptide: C-&gt;U-editing enzyme APOBEC-1 (235 aa).

The region spanning 10–131 (GDATLRRRIK…MDQQHRQGLK (122 aa)) is the CMP/dCMP-type deaminase domain. Residue His60 coordinates Zn(2+). The active-site Proton donor is the Glu62. Residues Cys92 and Cys95 each coordinate Zn(2+).

The protein belongs to the cytidine and deoxycytidylate deaminase family. Homodimer. Interacts with A1CF; form an mRNA editing complex. Interacts with RBM47; form an mRNA editing complex. Found in a complex with CELF2/CUGBP2 and A1CF. Interacts with HNRPAB. Interacts with SYNCRIP. Requires Zn(2+) as cofactor.

It is found in the cytoplasm. Its subcellular location is the nucleus. The enzyme catalyses a cytidine in mRNA + H2O + H(+) = a uridine in mRNA + NH4(+). The catalysed reaction is cytidine(6666) in apoB mRNA + H2O + H(+) = uridine(6666) in apoB mRNA + NH4(+). Cytidine deaminase catalyzing the cytidine to uridine postranscriptional editing of a variety of mRNAs. Form complexes with cofactors that confer differential editing activity and selectivity. Responsible for the postranscriptional editing of a CAA codon for Gln to a UAA codon for stop in the apolipoprotein B mRNA. Also involved in CGA (Arg) to UGA (Stop) editing in the NF1 mRNA. May also play a role in the epigenetic regulation of gene expression by participating in DNA demethylation. This chain is C-&gt;U-editing enzyme APOBEC-1, found in Monodelphis domestica (Gray short-tailed opossum).